The primary structure comprises 328 residues: Malate dehydrogenase (328 aa).

12–18 is an NAD(+) binding site; the sequence is GAAGQIG. Residues arginine 95 and arginine 101 each coordinate substrate. Residues asparagine 108, glutamine 115, and 132 to 134 each bind NAD(+); that span reads VGN. Substrate-binding residues include asparagine 134 and arginine 165. Histidine 190 serves as the catalytic Proton acceptor.

Belongs to the LDH/MDH superfamily. MDH type 2 family.

The catalysed reaction is (S)-malate + NAD(+) = oxaloacetate + NADH + H(+). Its function is as follows. Catalyzes the reversible oxidation of malate to oxaloacetate. This is Malate dehydrogenase from Paracidovorax citrulli (strain AAC00-1) (Acidovorax citrulli).